The primary structure comprises 372 residues: Glutamate 5-kinase (372 aa).

Lys14 contributes to the ATP binding site. 3 residues coordinate substrate: Ser54, Asp141, and Asn153. 173–174 (TD) contributes to the ATP binding site. The 79-residue stretch at 280 to 358 (RGTLVLDAGA…DAIESILGYS (79 aa)) folds into the PUA domain.

It belongs to the glutamate 5-kinase family.

The protein resides in the cytoplasm. It catalyses the reaction L-glutamate + ATP = L-glutamyl 5-phosphate + ADP. Its pathway is amino-acid biosynthesis; L-proline biosynthesis; L-glutamate 5-semialdehyde from L-glutamate: step 1/2. Functionally, catalyzes the transfer of a phosphate group to glutamate to form L-glutamate 5-phosphate. The polypeptide is Glutamate 5-kinase (Pseudomonas putida (strain GB-1)).